The primary structure comprises 71 residues: Long neurotoxin 1 (71 aa).

5 disulfide bridges follow: Cys3–Cys20, Cys14–Cys41, Cys26–Cys30, Cys45–Cys56, and Cys57–Cys62.

It belongs to the three-finger toxin family. Long-chain subfamily. Type II alpha-neurotoxin sub-subfamily. Expressed by the venom gland.

The protein resides in the secreted. Binds with high affinity to muscular (alpha-1/CHRNA1) and neuronal (alpha-7/CHRNA7) nicotinic acetylcholine receptor (nAChR) and inhibits acetylcholine from binding to the receptor, thereby impairing neuromuscular and neuronal transmission. The polypeptide is Long neurotoxin 1 (Naja nivea (Cape cobra)).